The primary structure comprises 757 residues: Protein aardvark (757 aa).

3 disordered regions span residues 39–63 (SSIN…DSNN), 122–166 (LEEN…SSIL), and 256–285 (SSNG…IESS). Residues 121–205 (ILEENNNNNN…FNQFNFLEGI (85 aa)) adopt a coiled-coil conformation. Low complexity-rich tracts occupy residues 125–164 (NNNN…SSSS) and 256–270 (SSNG…NNNN). Residues 310 to 356 (QFDIFLIPTEMLVHLLSFLSANDLWRISLTCKRIWYIVDVFKFWELL) form the F-box domain. ARM repeat units follow at residues 454–498 (GGIS…SNDN), 506–548 (GGIQ…VAIE), 549–591 (GGIQ…SAKE), 592–634 (GGIG…ISRQ), 635–678 (NGIQ…IARE), and 679–723 (GGIN…RSGG).

The protein belongs to the beta-catenin family.

The protein resides in the cytoplasm. It localises to the cell junction. Required to regulate pattern formation during multi-cellular stages of development and for the formation of adherens junctions. Plays a structural role during the regulation of stalk formation. Involved in cell signaling. Required for spore-cell differentiation. Overexpression increases number and size of cell junctions and reduces spore-cell formation. The sequence is that of Protein aardvark (aarA) from Dictyostelium discoideum (Social amoeba).